Here is a 575-residue protein sequence, read N- to C-terminus: G2/mitotic-specific cyclin-B3 (575 aa).

A D-box motif is present at residues 75–83 (RSALGNLTN). Ser215 carries the phosphoserine modification.

It belongs to the cyclin family. Cyclin AB subfamily. In terms of assembly, interacts with Cdk1 kinase. Post-translationally, ubiquitinated. Ubiquitination leads to its degradation in early anaphase. As to expression, in embryo, it is expressed in all mitotically proliferating cells, with a high level in neuroblasts. Not expressed in old embryos and thereafter. Not expressed in endoreplicating tissues.

Its subcellular location is the nucleus. Cyclins are positive regulatory subunits of the cyclin-dependent kinases (CDKs), and thereby play an essential role in the control of the cell cycle, notably via their destruction during cell division. Probably functions redundantly with other cyclins in regulation of cell cycle. Its presence may be required to delay a deadline for completing cytokinesis that is ordinary imposed by nuclear envelope reformation. Degradation of CycB and CycB3 promote cytokinesis furrow initiation and ingression. Required with CycB for female fertility. This chain is G2/mitotic-specific cyclin-B3 (CycB3), found in Drosophila melanogaster (Fruit fly).